We begin with the raw amino-acid sequence, 137 residues long: Peptidyl-tRNA hydrolase ArfB (137 aa).

Residues E102–F137 are disordered.

This sequence belongs to the prokaryotic/mitochondrial release factor family. In terms of assembly, associated with 70S ribosomes and polysomes.

The protein resides in the cytoplasm. The enzyme catalyses an N-acyl-L-alpha-aminoacyl-tRNA + H2O = an N-acyl-L-amino acid + a tRNA + H(+). Its function is as follows. Rescues stalled ribosomes. Can hydrolyze peptidyl-tRNA on ribosomes stalled by both non-stop mRNAs and mRNAs that contain rare codon clusters. In Pseudomonas putida (Arthrobacter siderocapsulatus), this protein is Peptidyl-tRNA hydrolase ArfB (arfB).